Reading from the N-terminus, the 138-residue chain is Cysteine desulfuration protein SufE (138 aa).

The active-site Cysteine persulfide intermediate is the Cys-51.

The protein belongs to the SufE family. In terms of assembly, homodimer. Interacts with SufS.

The protein resides in the cytoplasm. Its pathway is cofactor biosynthesis; iron-sulfur cluster biosynthesis. Its function is as follows. Participates in cysteine desulfuration mediated by SufS. Cysteine desulfuration mobilizes sulfur from L-cysteine to yield L-alanine and constitutes an essential step in sulfur metabolism for biosynthesis of a variety of sulfur-containing biomolecules. Functions as a sulfur acceptor for SufS, by mediating the direct transfer of the sulfur atom from the S-sulfanylcysteine of SufS, an intermediate product of cysteine desulfuration process. The protein is Cysteine desulfuration protein SufE of Escherichia coli O6:K15:H31 (strain 536 / UPEC).